The chain runs to 631 residues: ATP-dependent protease PrkA (631 aa).

A Phosphothreonine modification is found at Thr-217. Ser-219 bears the Phosphoserine mark.

It belongs to the PrkA family. Post-translationally, phosphorylated by PrkC on two sites, Thr-217 and Ser-219, with the threonine being the major site of modification.

The protein localises to the forespore. Its subcellular location is the spore coat. It carries out the reaction Hydrolysis of proteins in presence of ATP.. Hydrolase activity is regulated by phosphorylation by the Ser/Thr kinase PrkC, probably allowing fine control of sporulation. Phosphorylation by PrkC does not prevent ATP fixation but it inhibits specifically PrkA protease activity and down-regulates the sporulation processes. Hydrolase activity is inhibited by a protease inhibitor, phenylmethylsulfonyl fluoride (PMSF). Potential kinase activity requires the presence of MgCl(2) and is inhibited in the presence of MnCl(2). Functionally, ATP-dependent protease that regulates sporulation. Is able to bind and hydrolyze ATP. This ATP-dependent protease activity is necessary for efficient sporulation of B.subtilis. In vitro, can hydrolyze alpha-casein, an exogenous substrate of Lon proteases, in an ATP-dependent manner. PrkA also modulates sporulation by negatively regulating the transcriptional regulator Hpr/ScoC to induce the expression of sigK. The control of sporulation mediated via the Hpr/ScoC regulator is probably indirect. PrkA was originally thought to be a protein kinase, as it has been shown to phosphorylate in vitro an unidentified 60 kDa protein from B.subtilis crude extracts at a serine residue. However, Zhang et al. did not observe autophosphorylation or kinase activity for this protein, suggesting that it may have lost its kinase activity during evolution or may be a pseudokinase. The chain is ATP-dependent protease PrkA from Bacillus subtilis (strain 168).